The sequence spans 170 residues: ATP synthase subunit b (170 aa).

The chain crosses the membrane as a helical span at residues 15-37; that stretch reads LNLFETNVLNWAVVVFGLYKFLP.

Belongs to the ATPase B chain family. F-type ATPases have 2 components, F(1) - the catalytic core - and F(0) - the membrane proton channel. F(1) has five subunits: alpha(3), beta(3), gamma(1), delta(1), epsilon(1). F(0) has four main subunits: a(1), b(1), b'(1) and c(10-14). The alpha and beta chains form an alternating ring which encloses part of the gamma chain. F(1) is attached to F(0) by a central stalk formed by the gamma and epsilon chains, while a peripheral stalk is formed by the delta, b and b' chains.

It localises to the cellular thylakoid membrane. Functionally, f(1)F(0) ATP synthase produces ATP from ADP in the presence of a proton or sodium gradient. F-type ATPases consist of two structural domains, F(1) containing the extramembraneous catalytic core and F(0) containing the membrane proton channel, linked together by a central stalk and a peripheral stalk. During catalysis, ATP synthesis in the catalytic domain of F(1) is coupled via a rotary mechanism of the central stalk subunits to proton translocation. Its function is as follows. Component of the F(0) channel, it forms part of the peripheral stalk, linking F(1) to F(0). This chain is ATP synthase subunit b, found in Prochlorococcus marinus (strain MIT 9515).